Here is a 193-residue protein sequence, read N- to C-terminus: ATP-dependent Clp protease proteolytic subunit 2 (193 aa).

The active-site Nucleophile is the serine 98. The active site involves histidine 123.

Belongs to the peptidase S14 family. As to quaternary structure, fourteen ClpP subunits assemble into 2 heptameric rings which stack back to back to give a disk-like structure with a central cavity, resembling the structure of eukaryotic proteasomes.

It is found in the cytoplasm. The enzyme catalyses Hydrolysis of proteins to small peptides in the presence of ATP and magnesium. alpha-casein is the usual test substrate. In the absence of ATP, only oligopeptides shorter than five residues are hydrolyzed (such as succinyl-Leu-Tyr-|-NHMec, and Leu-Tyr-Leu-|-Tyr-Trp, in which cleavage of the -Tyr-|-Leu- and -Tyr-|-Trp bonds also occurs).. Its function is as follows. Cleaves peptides in various proteins in a process that requires ATP hydrolysis. Has a chymotrypsin-like activity. Plays a major role in the degradation of misfolded proteins. The sequence is that of ATP-dependent Clp protease proteolytic subunit 2 from Bacillus anthracis.